Here is a 420-residue protein sequence, read N- to C-terminus: MPLQVSDYSWQQTKTAVFLSLPLKGVCVRDTDVFCTENYLKVNFPPFLFEAFLYAPIDDESSKAKIGNDTIVFTLYKKEAAMWETLSVTGVDKETMQRIREKSILQAQERAKEATEAKAAAKREDQKYALSVMMKIEEEERKKIEDMKENERIKATKELEAWKEYQRKAEEHKKIQREEKLCQKEKQIKEERKKLKYKSLTRNSASRNLAPKGRNSENIFTEKLKEDSIPAPRSVGSIKINFTPRVFPTALRESQVAEEEEWLHKQAEARRAMNTDIAELCDLKEEEKNPEWLKDKGNKLFATENYLAAINAYNLAIRLNNKMPLLYLNRAACHLKLKNLHKAIEDSSKALELLMPPVTDNANARMKAHVRRGTAFCQLELYVEGLQDYEAALKIDPSNKIVQIDAEKIRNVIQGTELKS.

The 85-residue stretch at 3–87 folds into the CS domain; the sequence is LQVSDYSWQQ…KEAAMWETLS (85 aa). The tract at residues 7–103 is mediates interaction with ESR1 and STUB1; that stretch reads DYSWQQTKTA…ETMQRIREKS (97 aa). TPR repeat units follow at residues 290 to 323, 324 to 357, and 366 to 399; these read PEWL…NNKM, PLLY…LMPP, and MKAH…DPSN.

In terms of assembly, interacts with ZMYND10. Interacts with STUB1. Interacts with ESR1 and ESR2. Interacts with DNAAF2. Interacts with CCT3, CCT4, CCT5 and CCT8. Interacts with DNAAF6/PIH1D3.

Its subcellular location is the nucleus. It is found in the cytoplasm. The protein resides in the cell projection. It localises to the neuron projection. The protein localises to the dynein axonemal particle. Functionally, involved in neuronal migration during development of the cerebral neocortex. May regulate the stability and proteasomal degradation of the estrogen receptors that play an important role in neuronal differentiation, survival and plasticity. Axonemal dynein assembly factor required for ciliary motility. The chain is Dynein axonemal assembly factor 4 from Pongo pygmaeus (Bornean orangutan).